The primary structure comprises 740 residues: Phosphoribosylformylglycinamidine synthase subunit PurL (740 aa).

H53 is an active-site residue. Residues Y56 and K95 each coordinate ATP. Residue E97 coordinates Mg(2+). Residues 98 to 101 (SHNH) and R120 contribute to the substrate site. Catalysis depends on H99, which acts as the Proton acceptor. Position 121 (D121) interacts with Mg(2+). A substrate-binding site is contributed by Q244. Position 274 (D274) interacts with Mg(2+). Residue 318-320 (ESQ) coordinates substrate. ATP contacts are provided by D501 and G538. N539 provides a ligand contact to Mg(2+). S541 is a substrate binding site.

The protein belongs to the FGAMS family. In terms of assembly, monomer. Part of the FGAM synthase complex composed of 1 PurL, 1 PurQ and 2 PurS subunits.

The protein localises to the cytoplasm. It catalyses the reaction N(2)-formyl-N(1)-(5-phospho-beta-D-ribosyl)glycinamide + L-glutamine + ATP + H2O = 2-formamido-N(1)-(5-O-phospho-beta-D-ribosyl)acetamidine + L-glutamate + ADP + phosphate + H(+). The protein operates within purine metabolism; IMP biosynthesis via de novo pathway; 5-amino-1-(5-phospho-D-ribosyl)imidazole from N(2)-formyl-N(1)-(5-phospho-D-ribosyl)glycinamide: step 1/2. Its function is as follows. Part of the phosphoribosylformylglycinamidine synthase complex involved in the purines biosynthetic pathway. Catalyzes the ATP-dependent conversion of formylglycinamide ribonucleotide (FGAR) and glutamine to yield formylglycinamidine ribonucleotide (FGAM) and glutamate. The FGAM synthase complex is composed of three subunits. PurQ produces an ammonia molecule by converting glutamine to glutamate. PurL transfers the ammonia molecule to FGAR to form FGAM in an ATP-dependent manner. PurS interacts with PurQ and PurL and is thought to assist in the transfer of the ammonia molecule from PurQ to PurL. The polypeptide is Phosphoribosylformylglycinamidine synthase subunit PurL (Lactobacillus delbrueckii subsp. bulgaricus (strain ATCC 11842 / DSM 20081 / BCRC 10696 / JCM 1002 / NBRC 13953 / NCIMB 11778 / NCTC 12712 / WDCM 00102 / Lb 14)).